The primary structure comprises 290 residues: Nucleoid occlusion protein (290 aa).

A DNA-binding region (H-T-H motif) is located at residues 153–172 (EALAQRLGKGQSTIANKLRL).

This sequence belongs to the ParB family.

The protein resides in the cytoplasm. The protein localises to the nucleoid. Effects nucleoid occlusion by binding relatively nonspecifically to DNA and preventing the assembly of the division machinery in the vicinity of the nucleoid, especially under conditions that disturb the cell cycle. It helps to coordinate cell division and chromosome segregation by preventing the formation of the Z ring through the nucleoid, which would cause chromosome breakage. In Bacillus cytotoxicus (strain DSM 22905 / CIP 110041 / 391-98 / NVH 391-98), this protein is Nucleoid occlusion protein.